The sequence spans 156 residues: Small ribosomal subunit protein uS7 (156 aa).

Belongs to the universal ribosomal protein uS7 family. Part of the 30S ribosomal subunit. Contacts proteins S9 and S11.

In terms of biological role, one of the primary rRNA binding proteins, it binds directly to 16S rRNA where it nucleates assembly of the head domain of the 30S subunit. Is located at the subunit interface close to the decoding center, probably blocks exit of the E-site tRNA. The chain is Small ribosomal subunit protein uS7 from Mycobacterium bovis (strain ATCC BAA-935 / AF2122/97).